The sequence spans 105 residues: MRGAVHIFIMLLLATASDCAVITGACERDIQCGAGTCCAISLWLRGLRLCTPLGREGEECHPGSHKIPFLRKRQHHTCPCSPSLLCSRFPDGRYRCFRDLKNANF.

An N-terminal signal peptide occupies residues 1–19 (MRGAVHIFIMLLLATASDC). Disulfide bonds link cysteine 26–cysteine 38, cysteine 32–cysteine 50, cysteine 37–cysteine 78, cysteine 60–cysteine 86, and cysteine 80–cysteine 96.

Belongs to the AVIT (prokineticin) family. Highly expressed in liver and ovary and weakly expressed in testis and placenta. Expressed in mucosa and mesenchyme of embryonic gut during enteric nervous system development (at protein level). Predominantly expressed in kidney and liver. Also expressed in lung, ovary, placenta and testis. In fetal liver, is restricted to and highly expressed in hepatocytes. In adult kidney, expression is restricted to the endothelial tubule cells. In placenta, expressed throughout gestation.

The protein localises to the secreted. Potently contracts gastrointestinal (GI) smooth muscle. Induces proliferation, migration and fenestration (the formation of membrane discontinuities) in capillary endothelial cells. Induces proliferation and differentiation, but not migration, of enteric neural crest cells. Directly influences neuroblastoma progression by promoting the proliferation and migration of neuroblastoma cells. Positively regulates PTGS2 expression and prostaglandin synthesis. May play a role in placentation. May play a role in normal and pathological testis angiogenesis. This is Prokineticin-1 from Mus musculus (Mouse).